The primary structure comprises 298 residues: Cobalt-precorrin-5B C(1)-methyltransferase (298 aa).

Belongs to the CbiD family.

It catalyses the reaction Co-precorrin-5B + S-adenosyl-L-methionine = Co-precorrin-6A + S-adenosyl-L-homocysteine. It functions in the pathway cofactor biosynthesis; adenosylcobalamin biosynthesis; cob(II)yrinate a,c-diamide from sirohydrochlorin (anaerobic route): step 6/10. In terms of biological role, catalyzes the methylation of C-1 in cobalt-precorrin-5B to form cobalt-precorrin-6A. The chain is Cobalt-precorrin-5B C(1)-methyltransferase from Archaeoglobus fulgidus (strain ATCC 49558 / DSM 4304 / JCM 9628 / NBRC 100126 / VC-16).